A 699-amino-acid chain; its full sequence is Dymeclin (699 aa).

G2 is lipidated: N-myristoyl glycine. Phosphoserine is present on S346.

The protein belongs to the dymeclin family.

In Drosophila melanogaster (Fruit fly), this protein is Dymeclin.